The sequence spans 391 residues: GTPase Obg (391 aa).

The region spanning 1 to 159 (MKFLDQAKIF…IWVWLRLKLI (159 aa)) is the Obg domain. The 168-residue stretch at 160-327 (ADAGLIGLPN…VLRVMATHVD (168 aa)) folds into the OBG-type G domain. Residues 166–173 (GLPNAGKS), 191–195 (FTTLH), 212–215 (DIPG), 279–282 (SKID), and 308–310 (SAI) contribute to the GTP site. Mg(2+) contacts are provided by S173 and T193. The disordered stretch occupies residues 352–391 (TGIDHGYNRPSAVVDWEDAPFDDDDDDDGDESGDKGQWTR). Over residues 366–382 (DWEDAPFDDDDDDDGDE) the composition is skewed to acidic residues.

This sequence belongs to the TRAFAC class OBG-HflX-like GTPase superfamily. OBG GTPase family. As to quaternary structure, monomer. The cofactor is Mg(2+).

The protein localises to the cytoplasm. Its function is as follows. An essential GTPase which binds GTP, GDP and possibly (p)ppGpp with moderate affinity, with high nucleotide exchange rates and a fairly low GTP hydrolysis rate. Plays a role in control of the cell cycle, stress response, ribosome biogenesis and in those bacteria that undergo differentiation, in morphogenesis control. In Rhodospirillum rubrum (strain ATCC 11170 / ATH 1.1.1 / DSM 467 / LMG 4362 / NCIMB 8255 / S1), this protein is GTPase Obg.